The following is a 107-amino-acid chain: L-amino-acid oxidase (107 aa).

35–38 (GPMR) is an FAD binding site. Arginine 38 and histidine 49 together coordinate substrate.

The protein belongs to the flavin monoamine oxidase family. FIG1 subfamily. As to quaternary structure, homodimer; non-covalently linked. FAD is required as a cofactor. In terms of processing, N-glycosylated. In terms of tissue distribution, expressed by the venom gland.

Its subcellular location is the secreted. The catalysed reaction is an L-alpha-amino acid + O2 + H2O = a 2-oxocarboxylate + H2O2 + NH4(+). The enzyme catalyses L-leucine + O2 + H2O = 4-methyl-2-oxopentanoate + H2O2 + NH4(+). It catalyses the reaction L-phenylalanine + O2 + H2O = 3-phenylpyruvate + H2O2 + NH4(+). It carries out the reaction L-tryptophan + O2 + H2O = indole-3-pyruvate + H2O2 + NH4(+). The catalysed reaction is L-methionine + O2 + H2O = 4-methylsulfanyl-2-oxobutanoate + H2O2 + NH4(+). The enzyme catalyses L-isoleucine + O2 + H2O = (S)-3-methyl-2-oxopentanoate + H2O2 + NH4(+). It catalyses the reaction L-arginine + O2 + H2O = 5-guanidino-2-oxopentanoate + H2O2 + NH4(+). It carries out the reaction L-histidine + O2 + H2O = 3-(imidazol-5-yl)pyruvate + H2O2 + NH4(+). Its function is as follows. Catalyzes an oxidative deamination of predominantly hydrophobic and aromatic L-amino acids, thus producing hydrogen peroxide that may contribute to the diverse toxic effects of this enzyme. Shows high activity on L-Met, moderate activity on L-Trp, L-Leu, L-His, L-Phe, L-Arg, L-Ile, low activity on L-Val, L-Glu, L-Lys, L-Gln, L-Asn, L-Tyr, L-Ala, and no activity on L-Asp, L-Ser, L-Pro, L-Gly, L-Thr and L-Cys. Shows antimicrobial activity inhibiting the growth of both Gram-negative and Gram-positive bacteria. Also inhibits platelet aggregation induced by ADP or collagen. Effects of snake L-amino oxidases on platelets are controversial, since they either induce aggregation or inhibit agonist-induced aggregation. These different effects are probably due to different experimental conditions. This protein may also induce hemorrhage, hemolysis, edema, apoptosis, and have antiparasitic activities. The sequence is that of L-amino-acid oxidase from Macrovipera lebetinus (Levantine viper).